The primary structure comprises 391 residues: Acetate kinase (391 aa).

Asn-7 provides a ligand contact to Mg(2+). Lys-14 provides a ligand contact to ATP. Position 88 (Arg-88) interacts with substrate. Asp-145 acts as the Proton donor/acceptor in catalysis. Residues 203–207, 278–280, and 326–330 contribute to the ATP site; these read HAGNG, DAR, and GMGEN. A Mg(2+)-binding site is contributed by Glu-378.

This sequence belongs to the acetokinase family. Homodimer. Requires Mg(2+) as cofactor. Mn(2+) serves as cofactor.

It is found in the cytoplasm. The catalysed reaction is acetate + ATP = acetyl phosphate + ADP. The protein operates within metabolic intermediate biosynthesis; acetyl-CoA biosynthesis; acetyl-CoA from acetate: step 1/2. In terms of biological role, catalyzes the formation of acetyl phosphate from acetate and ATP. Can also catalyze the reverse reaction. The chain is Acetate kinase from Phytoplasma mali (strain AT).